Consider the following 116-residue polypeptide: Small ribosomal subunit protein uS10m (116 aa).

Belongs to the universal ribosomal protein uS10 family.

Its subcellular location is the mitochondrion. This chain is Small ribosomal subunit protein uS10m (RPS10), found in Reclinomonas americana.